Consider the following 229-residue polypeptide: Putative germin-like protein subfamily 1 member 2 (229 aa).

Residues 1–24 (MKGLVQFLVAKIILLVLASTFVHC) form the signal peptide. A disulfide bridge connects residues Cys34 and Cys50. Residues Asn38 and Asn71 are each glycosylated (N-linked (GlcNAc...) asparagine). A Cupin type-1 domain is found at 64-215 (SGLNIPGNTS…AFALDVNIVR (152 aa)). The Mn(2+) site is built by His112 and His114. Residue Asn139 is glycosylated (N-linked (GlcNAc...) asparagine). Mn(2+) is bound at residue His163.

It belongs to the germin family. As to quaternary structure, oligomer (believed to be a pentamer but probably hexamer).

It is found in the secreted. Its subcellular location is the extracellular space. The protein localises to the apoplast. Functionally, may play a role in plant defense. Probably has no oxalate oxidase activity even if the active site is conserved. This chain is Putative germin-like protein subfamily 1 member 2, found in Arabidopsis thaliana (Mouse-ear cress).